Reading from the N-terminus, the 122-residue chain is Small ribosomal subunit protein uS13 (122 aa).

Residues 98-122 are disordered; that stretch reads VRGQRTHTNARTRKGPAKAIAGKKK.

The protein belongs to the universal ribosomal protein uS13 family. In terms of assembly, part of the 30S ribosomal subunit. Forms a loose heterodimer with protein S19. Forms two bridges to the 50S subunit in the 70S ribosome.

In terms of biological role, located at the top of the head of the 30S subunit, it contacts several helices of the 16S rRNA. In the 70S ribosome it contacts the 23S rRNA (bridge B1a) and protein L5 of the 50S subunit (bridge B1b), connecting the 2 subunits; these bridges are implicated in subunit movement. Contacts the tRNAs in the A and P-sites. This is Small ribosomal subunit protein uS13 from Ruegeria pomeroyi (strain ATCC 700808 / DSM 15171 / DSS-3) (Silicibacter pomeroyi).